An 875-amino-acid chain; its full sequence is Alanine--tRNA ligase (875 aa).

Residues histidine 564, histidine 568, cysteine 666, and histidine 670 each contribute to the Zn(2+) site.

The protein belongs to the class-II aminoacyl-tRNA synthetase family. As to quaternary structure, homotetramer. Zn(2+) is required as a cofactor.

Its subcellular location is the cytoplasm. The enzyme catalyses tRNA(Ala) + L-alanine + ATP = L-alanyl-tRNA(Ala) + AMP + diphosphate. Functionally, catalyzes the attachment of alanine to tRNA(Ala) in a two-step reaction: alanine is first activated by ATP to form Ala-AMP and then transferred to the acceptor end of tRNA(Ala). Also edits incorrectly charged Ser-tRNA(Ala) and Gly-tRNA(Ala) via its editing domain. This is Alanine--tRNA ligase from Yersinia pestis bv. Antiqua (strain Angola).